We begin with the raw amino-acid sequence, 259 residues long: MKTLAFCSFKGGTGKTTLSLNIGSNLAQVSRKKVLLVDLDPQANLTTGLGVQIQDDHSLNEILRHSNEIRRAIHKTKIENLDIIPSSVLVEDFRGLDKDISLSVNHLHLALQKVQDQYDVCILDTPPSLGILSQEAFLASDYLVVCLTPEPFSILGLQKIKEFCSTIGNNLDILGIVFSFWDERNSTNSTYMDIIETIYEGKILSSKIRRDVTVSRSLLKESSVINAYPNSRAAKDILNLTKEIENKLFSDEKLVQETL.

Residue 9 to 16 coordinates ATP; the sequence is FKGGTGKT.

Belongs to the ParA family.

This Chlamydia psittaci (Chlamydophila psittaci) protein is Virulence plasmid ParA family protein pGP5-D.